Here is a 6629-residue protein sequence, read N- to C-terminus: MASSLKQGVSPKPRDVILVSKDIPEQLCDALFFYTSHNPKDYADAFAVRQKFDRSLQTGKQFKFETVCGLFLLKGVDKITPGVPAKVLKATSKLADLEDIFGVSPLARKYRELLKTACQWSLTVEALDVRAQTLDEIFDPTEILWLQVAAKIHVSSMAMRRLVGEVTAKVMDALGSNLSALFQIVKQQIARIFQKALAIFENVNELPQRIAALKMAFAKCARSITVVVVERTLVVKEFAGTCLASINGAVAKFFEELPNGFMGSKIFTTLAFFKEAAVRVVENIPNAPRGTKGFEVVGNAKGTQVVVRGMRNDLTLLDQKADIPVEPEGWSAILDGHLCYVFRSGDRFYAAPLSGNFALSDVHCCERVVCLSDGVTPEINDGLILAAIYSSFSVSELVTALKKGEPFKFLGHKFVYAKDAAVSFTLAKAATIADVLRLFQSARVIAEDVWSSFTEKSFEFWKLAYGKVRNLEEFVKTYVCKAQMSIVILAAVLGEDIWHLVSQVIYKLGVLFTKVVDFCDKHWKGFCVQLKRAKLIVTETFCVLKGVAQHCFQLLLDAIHSLYKSFKKCALGRIHGDLLFWKGGVHKIVQDGDEIWFDAIDSVDVEDLGVVQEKSIDFEVCDDVTLPENQPGHMVQIEDDGKNYMFFRFKKDENIYYTPMSQLGAINVVCKAGGKTVTFGETTVQEIPPPDVVPIKVSIECCGEPWNTIFKKAYKEPIEVDTDLTVEQLLSVIYEKMCDDLKLFPEAPEPPPFENVALVDKNGKDLDCIKSCHLIYRDYESDDDIEEEDAEECDTDSGEAEECDTNSECEEEDEDTKVLALIQDPASIKYPLPLDEDYSVYNGCIVHKDALDVVNLPSGEETFVVNNCFEGAVKPLPQKVVDVLGDWGEAVDAQEQLCQQEPLQHTFEEPVENSTGSSKTMTEQVVVEDQELPVVEQDQDVVVYTPTDLEVAKETAEEVDEFILIFAVPKEEVVSQKDGAQIKQEPIQVVKPQREKKAKKFKVKPATCEKPKFLEYKTCVGDLTVVIAKALDEFKEFCIVNAANEHMTHGSGVAKAIADFCGLDFVEYCEDYVKKHGPQQRLVTPSFVKGIQCVNNVVGPRHGDNNLHEKLVAAYKNVLVDGVVNYVVPVLSLGIFGVDFKMSIDAMREAFEGCTIRVLLFSLSQEHIDYFDVTCKQKTIYLTEDGVKYRSIVLKPGDSLGQFGQVYAKNKIVFTADDVEDKEILYVPTTDKSILEYYGLDAQKYVIYLQTLAQKWNVQYRDNFLILEWRDGNCWISSAIVLLQAAKIRFKGFLTEAWAKLLGGDPTDFVAWCYASCTAKVGDFSDANWLLANLAEHFDADYTNAFLKKRVSCNCGIKSYELRGLEACIQPVRATNLLHFKTQYSNCPTCGANNTDEVIEASLPYLLLFATDGPATVDCDEDAVGTVVFVGSTNSGHCYTQAAGQAFDNLAKDRKFGKKSPYITAMYTRFAFKNETSLPVAKQSKGKSKSVKEDVSNLATSSKASFDNLTDFEQWYDSNIYESLKVQESPDNFDKYVSFTTKEDSKLPLTLKVRGIKSVVDFRSKDGFIYKLTPDTDENSKAPVYYPVLDAISLKAIWVEGNANFVVGHPNYYSKSLHIPTFWENAENFVKMGDKIGGVTMGLWRAEHLNKPNLERIFNIAKKAIVGSSVVTTQCGKLIGKAATFIADKVGGGVVRNITDSIKGLCGITRGHFERKMSPQFLKTLMFFLFYFLKASVKSVVASYKTVLCKVVLATLLIVWFVYTSNPVMFTGIRVLDFLFEGSLCGPYKDYGKDSFDVLRYCADDFICRVCLHDKDSLHLYKHAYSVEQVYKDAASGFIFNWNWLYLVFLILFVKPVAGFVIICYCVKYLVLNSTVLQTGVCFLDWFVQTVFSHFNFMGAGFYFWLFYKIYIQVHHILYCKDVTCEVCKRVARSNRQEVSVVVGGRKQIVHVYTNSGYNFCKRHNWYCRNCDDYGHQNTFMSPEVAGELSEKLKRHVKPTAYAYHVVDEACLVDDFVNLKYKAATPGKDSASSAVKCFSVTDFLKKAVFLKEALKCEQISNDGFIVCNTQSAHALEEAKNAAIYYAQYLCKPILILDQALYEQLVVEPVSKSVIDKVCSILSSIISVDTAALNYKAGTLRDALLSITKDEEAVDMAIFCHNHDVDYTGDGFTNVIPSYGIDTGKLTPRDRGFLINADASIANLRVKNAPPVVWKFSELIKLSDSCLKYLISATVKSGVRFFITKSGAKQVIACHTQKLLVEKKAGGIVSGTFKCFKSYFKWLLIFYILFTACCSGYYYMEVSKSFVHPMYDVNSTLHVEGFKVIDKGVLREIVPEDTCFSNKFVNFDAFWGRPYDNSRNCPIVTAVIDGDGTVATGVPGFVSWVMDGVMFIHMTQTERKPWYIPTWFNREIVGYTQDSIITEGSFYTSIALFSARCLYLTASNTPQLYCFNGDNDAPGALPFGSIIPHRVYFQPNGVRLIVPQQILHTPYVVKFVSDSYCRGSVCEYTRPGYCVSLNPQWVLFNDEYTSKPGVFCGSTVRELMFSMVSTFFTGVNPNIYMQLATMFLILVVVVLIFAMVIKFQGVFKAYATTVFITMLVWVINAFILCVHSYNSVLAVILLVLYCYASLVTSRNTVIIMHCWLVFTFGLIVPTWLACCYLGFIIYMYTPLFLWCYGTTKNTRKLYDGNEFVGNYDLAAKSTFVIRGSEFVKLTNEIGDKFEAYLSAYARLKYYSGTGSEQDYLQACRAWLAYALDQYRNSGVEIVYTPPRYSIGVSRLQSGFKKLVSPSSAVEKCIVSVSYRGNNLNGLWLGDTIYCPRHVLGKFSGDQWNDVLNLANNHEFEVTTQHGVTLNVVSRRLKGAVLILQTAVANAETPKYKFIKANCGDSFTIACAYGGTVVGLYPVTMRSNGTIRASFLAGACGSVGFNIEKGVVNFFYMHHLELPNALHTGTDLMGEFYGGYVDEEVAQRVPPDNLVTNNIVAWLYAAIISVKESSFSLPKWLESTTVSVDDYNKWAGDNGFTPFSTSTAITKLSAITGVDVCKLLRTIMVKNSQWGGDPILGQYNFEDELTPESVFNQIGGVRLQSSFVRKATSWFWSRCVLACFLFVLCAIVLFTAVPLKFYVYAAVILLMAVLFISFTVKHVMAYMDTFLLPTLITVIIGVCAEVPFIYNTLISQVVIFLSQWYDPVVFDTMVPWMFLPLVLYTAFKCVQGCYMNSFNTSLLMLYQFVKLGFVIYTSSNTLTAYTEGNWELFFELVHTTVLANVSSNSLIGLFVFKCAKWMLYYCNATYLNNYVLMAVMVNCIGWLCTCYFGLYWWVNKVFGLTLGKYNFKVSVDQYRYMCLHKINPPKTVWEVFSTNILIQGIGGDRVLPIATVQAKLSDVKCTTVVLMQLLTKLNVEANSKMHVYLVELHNKILASDDVGECMDNLLGMLITLFCIDSTIDLSEYCDDILKRSTVLQSVTQEFSHIPSYAEYERAKNLYEKVLVDSKNGGVTQQELAAYRKAANIAKSVFDRDLAVQKKLDSMAERAMTTMYKEARVTDRRAKLVSSLHALLFSMLKKIDSEKLNVLFDQASSGVVPLATVPIVCSNKLTLVIPDPETWVKCVEGVHVTYSTVVWNIDTVIDADGTELHPTSTGSGLTYCISGANIAWPLKVNLTRNGHNKVDVVLQNNELMPHGVKTKACVAGVDQAHCSVESKCYYTNISGNSVVAAITSSNPNLKVASFLNEAGNQIYVDLDPPCKFGMKVGVKVEVVYLYFIKNTRSIVRGMVLGAISNVVVLQSKGHETEEVDAVGILSLCSFAVDPADTYCKYVAAGNQPLGNCVKMLTVHNGSGFAITSKPSPTPDQDSYGGASVCLYCRAHIAHPGSVGNLDGRCQFKGSFVQIPTTEKDPVGFCLRNKVCTVCQCWIGYGCQCDSLRQPKSSVQSVAGASDFDKNYLNRVRGSSEARLIPLASGCDPDVVKRAFDVCNKESAGMFQNLKRNCARFQELRDTEDGNLEYLDSYFVVKQTTPSNYEHEKSCYEDLKSEVTADHDFFVFNKNIYNISRQRLTKYTMMDFCYALRHFDPKDCEVLKEILVTYGCIEDYHPKWFEENKDWYDPIENSKYYVMLAKMGPIVRRALLNAIEFGNLMVEKGYVGVITLDNQDLNGKFYDFGDFQKTAPGAGVPVFDTYYSYMMPIIAMTDALAPERYFEYDVHKGYKSYDLLKYDYTEEKQELFQKYFKYWDQEYHPNCRDCSDDRCLIHCANFNILFSTLIPQTSFGNLCRKVFVDGVPFIATCGYHSKELGVIMNQDNTMSFSKMGLSQLMQFVGDPALLVGTSNNLVDLRTSCFSVCALTSGITHQTVKPGHFNKDFYDFAEKAGMFKEGSSIPLKHFFYPQTGNAAINDYDYYRYNRPTMFDICQLLFCLEVTSKYFECYEGGCIPASQVVVNNLDKSAGYPFNKFGKARLYYEMSLEEQDQLFEITKKNVLPTITQMNLKYAISAKNRARTVAGVSILSTMTNRQFHQKILKSIVNTRNASVVIGTTKFYGGWDNMLRNLIQGVEDPILMGWDYPKCDRAMPNLLRIAASLVLARKHTNCCSWSERIYRLYNECAQVLSETVLATGGIYVKPGGTSSGDATTAYANSVFNIIQATSANVARLLSVITRDIVYDNIKSLQYELYQQVYRRVNFDPAFVEKFYSYLCKNFSLMILSDDGVVCYNNTLAKQGLVADISGFREVLYYQNNVFMADSKCWVEPDLEKGPHEFCSQHTMLVEVDGEPKYLPYPDPSRILGACVFVDDVDKTEPVAVMERYIALAIDAYPLVHHENEEYKKVFFVLLAYIRKLYQELSQNMLMDYSFVMDIDKGSKFWEQEFYENMYRAPTTLQSCGVCVVCNSQTILRCGNCIRKPFLCCKCCYDHVMHTDHKNVLSINPYICSQLGCGEADVTKLYLGGMSYFCGNHKPKLSIPLVSNGTVFGIYRANCAGSENVDDFNQLATTNWSIVEPYILANRCSDSLRRFAAETVKATEELHKQQFASAEVREVFSDRELILSWEPGKTRPPLNRNYVFTGYHFTRTSKVQLGDFTFEKGEGKDVVYYKATSTAKLSVGDIFVLTSHNVVSLVAPTLCPQQTFSRFVNLRPNVMVPECFVNNIPLYHLVGKQKRTTVQGPPGSGKSHFAIGLAVYFSSARVVFTACSHAAVDALCEKAFKFLKVDDCTRIVPQRTTVDCFSKFKANDTGKKYIFSTINALPEVSCDILLVDEVSMLTNYELSFINGKINYQYVVYVGDPAQLPAPRTLLNGSLSPKDYNVVTNLMVCVKPDIFLAKCYRCPKEIVDTVSTLVYDGKFIANNPESRECFKVIVNNGNSDVGHESGSAYNTTQLEFVKDFVCRNKQWREAIFISPYNAMNQRAYRMLGLNVQTVDSSQGSEYDYVIFCVTADSQHALNINRFNVALTRAKRGILVVMRQRDELYSALKFTELDSETSLQGTGLFKICNKEFSGVHPAYAVTTKALAATYKVNDELAALVNVEAGSEITYKHLISLLGFKMSVNVEGCHNMFITRDEAIRNVRGWVGFDVEATHACGTNIGTNLPFQVGFSTGADFVVTPEGLVDTSIGNNFEPVNSKAPPGEQFNHLRVLFKSAKPWHVIRPRIVQMLADNLCNVSDCVVFVTWCHGLELTTLRYFVKIGKEQVCSCGSRATTFNSHTQAYACWKHCLGFDFVYNPLLVDIQQWGYSGNLQFNHDLHCNVHGHAHVASVDAIMTRCLAINNAFCQDVNWDLTYPHIANEDEVNSSCRYLQRMYLNACVDALKVNVVYDIGNPKGIKCVRRGDVNFRFYDKNPIVRNVKQFEYDYNQHKDKFADGLCMFWNCNVDCYPDNSLVCRYDTRNLSVFNLPGCNGGSLYVNKHAFYTPKFDRISFRNLKAMPFFFYDSSPCETIQVDGVAQDLVSLATKDCITKCNIGGAVCKKHAQMYAEFVTSYNAAVTAGFTFWVTNKLNPYNLWKSFSALQSIDNIAYNMYKGGHYDAIAGEMPTVITGDKVFVIDQGVEKAVFVNQTTLPTSVAFELYAKRNIRTLPNNRILKGLGVDVTNGFVIWDYANQTPLYRNTVKVCAYTDIEPNGLVVLYDDRYGDYQSFLAADNAVLVSTQCYKRYSYVEIPSNLLVQNGMPLKDGANLYVYKRVNGAFVTLPNTINTQGRSYETFEPRSDIERDFLAMSEESFVERYGKDLGLQHILYGEVDKPQLGGLHTVIGMYRLLRANKLNAKSVTNSDSDVMQNYFVLSDNGSYKQVCTVVDLLLDDFLELLRNILKEYGTNKSKVVTVSIDYHSINFMTWFEDGSIKTCYPQLQSAWTCGYNMPELYKVQNCVMEPCNIPNYGVGITLPSGILMNVAKYTQLCQYLSKTTICVPHNMRVMHFGAGSDKGVAPGSTVLKQWLPEGTLLVDNDIVDYVSDAHVSVLSDCNKYNTEHKFDLVISDMYTDNDSKRKHEGVIANNGNDDVFIYLSSFLRNNLALGGSFAVKVTETSWHEVLYDIAQDCAWWTMFCTAVNASSSEAFLIGVNYLGASEKVKVSGKTLHANYIFWRNCNYLQTSAYSIFDVAKFDLRLKATPVVNLKTEQKTDLVFNLIKCGKLLVRDVGNTSFTSDSFVCTM.

The Cytoplasmic portion of the chain corresponds to 1 to 1750 (MASSLKQGVS…VASYKTVLCK (1750 aa)). The Ubiquitin-like 1 domain maps to 675–780 (KTVTFGETTV…SCHLIYRDYE (106 aa)). The segment at 783-802 (DDIEEEDAEECDTDSGEAEE) is disordered. In terms of domain architecture, Macro spans 1003-1179 (VKPATCEKPK…YFDVTCKQKT (177 aa)). The region spanning 1175–1227 (CKQKTIYLTEDGVKYRSIVLKPGDSLGQFGQVYAKNKIVFTADDVEDKEILYV) is the Ubiquitin-like 2 domain. A Peptidase C16 domain is found at 1236–1497 (EYYGLDAQKY…SKSVKEDVSN (262 aa)). Catalysis depends on cysteine 1274, which acts as the For PL-PRO activity. Zn(2+) contacts are provided by cysteine 1353, cysteine 1355, cysteine 1387, and cysteine 1390. The C4-type; degenerate zinc finger occupies 1353–1390 (CNCGIKSYELRGLEACIQPVRATNLLHFKTQYSNCPTC). Residues histidine 1437 and aspartate 1448 each act as for PL-PRO activity in the active site. The helical transmembrane segment at 1751 to 1771 (VVLATLLIVWFVYTSNPVMFT) threads the bilayer. Residues 1751–1864 (VVLATLLIVW…KPVAGFVIIC (114 aa)) form an HD1 region. Residues 1769 to 1833 (MFTGIRVLDF…AYSVEQVYKD (65 aa)) enclose the 3Ecto domain. At 1772–1843 (GIRVLDFLFE…AASGFIFNWN (72 aa)) the chain is on the lumenal side. Intrachain disulfides connect cysteine 1785–cysteine 1811 and cysteine 1802–cysteine 1808. A helical transmembrane segment spans residues 1844-1864 (WLYLVFLILFVKPVAGFVIIC). Over 1865-2280 (YCVKYLVLNS…TFKCFKSYFK (416 aa)) the chain is Cytoplasmic. A Y1 region spans residues 1911–2001 (YIQVHHILYC…KLKRHVKPTA (91 aa)). In terms of domain architecture, CoV Nsp3 Y spans 1911 to 2263 (YIQVHHILYC…HTQKLLVEKK (353 aa)). Residues histidine 1915, cysteine 1920, cysteine 1925, cysteine 1928, cysteine 1961, histidine 1964, cysteine 1968, and cysteine 1971 each coordinate Zn(2+). The ZF1 stretch occupies residues 1915 to 1928 (HHILYCKDVTCEVC). Residues 1961–1971 (CKRHNWYCRNC) are ZF2. The Y2 stretch occupies residues 2002-2104 (YAYHVVDEAC…ILDQALYEQL (103 aa)). Residues 2002 to 2263 (YAYHVVDEAC…HTQKLLVEKK (262 aa)) are coV-Y. A Y3 region spans residues 2105–2163 (VVEPVSKSVIDKVCSILSSIISVDTAALNYKAGTLRDALLSITKDEEAVDMAIFCHNHD). The interval 2164 to 2263 (VDYTGDGFTN…HTQKLLVEKK (100 aa)) is Y4. A helical membrane pass occupies residues 2281 to 2301 (WLLIFYILFTACCSGYYYMEV). The segment at 2281-2664 (WLLIFYILFT…LACCYLGFII (384 aa)) is HD2. The Lumenal segment spans residues 2302–2559 (SKSFVHPMYD…FFTGVNPNIY (258 aa)). Residues 2560 to 2580 (MQLATMFLILVVVVLIFAMVI) form a helical membrane-spanning segment. Residues 2581 to 2611 (KFQGVFKAYATTVFITMLVWVINAFILCVHS) lie on the Cytoplasmic side of the membrane. Residues 2612 to 2632 (YNSVLAVILLVLYCYASLVTS) traverse the membrane as a helical segment. Residues 2633–2643 (RNTVIIMHCWL) are Lumenal-facing. A helical membrane pass occupies residues 2644–2664 (VFTFGLIVPTWLACCYLGFII). Over 2665-3096 (YMYTPLFLWC…SSFVRKATSW (432 aa)) the chain is Cytoplasmic. The Nsp4C domain maps to 2684-2779 (LYDGNEFVGN…RYSIGVSRLQ (96 aa)). Residues 2780-3086 (SGFKKLVSPS…FNQIGGVRLQ (307 aa)) form the Peptidase C30 domain. Catalysis depends on for 3CL-PRO activity residues histidine 2820 and cysteine 2922. The helical transmembrane segment at 3097 to 3117 (FWSRCVLACFLFVLCAIVLFT) threads the bilayer. Residues 3097-3317 (FWSRCVLACF…WLCTCYFGLY (221 aa)) are HD3. Residues 3118–3121 (AVPL) lie on the Lumenal side of the membrane. Residues 3122 to 3142 (KFYVYAAVILLMAVLFISFTV) form a helical membrane-spanning segment. The Cytoplasmic portion of the chain corresponds to 3143-3151 (KHVMAYMDT). Residues 3152 to 3172 (FLLPTLITVIIGVCAEVPFIY) traverse the membrane as a helical segment. The Lumenal segment spans residues 3173–3188 (NTLISQVVIFLSQWYD). Residues 3189–3209 (PVVFDTMVPWMFLPLVLYTAF) form a helical membrane-spanning segment. The Cytoplasmic segment spans residues 3210 to 3257 (KCVQGCYMNSFNTSLLMLYQFVKLGFVIYTSSNTLTAYTEGNWELFFE). A helical transmembrane segment spans residues 3258 to 3278 (LVHTTVLANVSSNSLIGLFVF). Residues 3279–3296 (KCAKWMLYYCNATYLNNY) are Lumenal-facing. A helical transmembrane segment spans residues 3297–3317 (VLMAVMVNCIGWLCTCYFGLY). Topologically, residues 3318-6629 (WWVNKVFGLT…FTSDSFVCTM (3312 aa)) are cytoplasmic. Residues 3380-3462 (AKLSDVKCTT…DILKRSTVLQ (83 aa)) form the RdRp Nsp7 cofactor domain. The RdRp Nsp8 cofactor domain occupies 3463–3672 (SVTQEFSHIP…GHNKVDVVLQ (210 aa)). One can recognise a Nsp9 ssRNA-binding domain in the interval 3673–3783 (NNELMPHGVK…GAISNVVVLQ (111 aa)). Residues 3785-3926 (KGHETEEVDA…CDSLRQPKSS (142 aa)) form the ExoN/MTase coactivator domain. The Zn(2+) site is built by cysteine 3858, cysteine 3861, histidine 3867, cysteine 3878, cysteine 3904, cysteine 3907, cysteine 3915, and cysteine 3917. Zinc fingers lie at residues 3858–3878 (CLYC…DGRC) and 3904–3917 (CTVC…GCQC). The 259-residue stretch at 3940–4198 (YLNRVRGSSE…APERYFEYDV (259 aa)) folds into the NiRAN domain. Positions 4203-4301 (KSYDLLKYDY…MNQDNTMSFS (99 aa)) constitute a Nsp12 Interface domain. Residues histidine 4232, cysteine 4238, cysteine 4243, cysteine 4247, and cysteine 4424 each contribute to the Zn(2+) site. Residues 4302–4868 (KMGLSQLMQF…NMYRAPTTLQ (567 aa)) form the Nsp12 RNA-dependent RNA polymerase domain. Residues 4304–4517 (GLSQLMQFVG…HQKILKSIVN (214 aa)) are rdRp Fingers N-ter. The tract at residues 4518–4556 (TRNASVVIGTTKFYGGWDNMLRNLIQGVEDPILMGWDYP) is rdRp Palm N-ter. The region spanning 4548–4710 (PILMGWDYPK…CYNNTLAKQG (163 aa)) is the RdRp catalytic domain. The rdRp Fingers C-ter stretch occupies residues 4557–4615 (KCDRAMPNLLRIAASLVLARKHTNCCSWSERIYRLYNECAQVLSETVLATGGIYVKPGG). Zn(2+) is bound by residues histidine 4578, cysteine 4581, and cysteine 4582. The tract at residues 4616-4751 (TSSGDATTAY…EKGPHEFCSQ (136 aa)) is rdRp Palm C-ter. Residues serine 4695, aspartate 4696, and aspartate 4697 contribute to the active site. The segment at 4752-4868 (HTMLVEVDGE…NMYRAPTTLQ (117 aa)) is rdRp Thumb. The CV ZBD domain occupies 4869-4981 (SCGVCVVCNS…DDFNQLATTN (113 aa)). Cysteine 4873, cysteine 4876, cysteine 4884, cysteine 4887, cysteine 4894, cysteine 4897, histidine 4901, histidine 4907, cysteine 4918, cysteine 4923, cysteine 4940, and histidine 4943 together coordinate Zn(2+). A (+)RNA virus helicase ATP-binding domain is found at 5125–5305 (MVPECFVNNI…MVCVKPDIFL (181 aa)). An ATP-binding site is contributed by 5150–5157 (GPPGSGKS). Positions 5306-5477 (AKCYRCPKEI…QGTGLFKICN (172 aa)) constitute a (+)RNA virus helicase C-terminal domain. The ExoN domain maps to 5539 to 5753 (MFITRDEAIR…RCLAINNAFC (215 aa)). Catalysis depends on residues aspartate 5557, glutamate 5559, and glutamate 5658. The Zn(2+) site is built by cysteine 5674, cysteine 5676, cysteine 5692, histidine 5695, histidine 5723, cysteine 5727, and histidine 5730. Catalysis depends on residues histidine 5734 and aspartate 5739. Zn(2+) is bound at residue cysteine 5745. Positions 5762 to 5989 (YPHIANEDEV…NLWKSFSALQ (228 aa)) constitute an N7-MTase domain. 5797-5803 (DIGNPKG) contributes to the S-adenosyl-L-methionine binding site. A gpppA-binding region spans residues 5877–5891 (CNGGSLYVNKHAFYT). Positions 5915, 5935, 5946, and 5949 each coordinate Zn(2+). Residues 5990–6050 (SIDNIAYNMY…SVAFELYAKR (61 aa)) form the Nsp15 N-terminal oligomerization domain. The AV-Nsp11N/CoV-Nsp15M domain occupies 6051–6166 (NIRTLPNNRI…VYKRVNGAFV (116 aa)). A NendoU domain is found at 6183–6324 (EPRSDIERDF…EDGSIKTCYP (142 aa)). Active-site residues include histidine 6212, histidine 6227, lysine 6267, lysine 6371, aspartate 6455, lysine 6499, and glutamate 6532. Residues 6327–6626 (QSAWTCGYNM…NTSFTSDSFV (300 aa)) enclose the Nidovirus-type SAM-dependent 2'-O-MTase domain.

It belongs to the coronaviruses polyprotein 1ab family. In terms of assembly, interacts with host PHB and PHB2. Interacts with papain-like protease and non-structural protein 6. As to quaternary structure, monomer. Homodimer. Only the homodimer shows catalytic activity. In terms of assembly, eight copies of nsp7 and eight copies of nsp8 assemble to form a heterohexadecamer dsRNA-encircling ring structure. Eight copies of nsp7 and eight copies of nsp8 assemble to form a heterohexadecamer dsRNA-encircling ring structure. Interacts with ORF6 protein. As to quaternary structure, homodimer. In terms of assembly, homododecamer. Interacts with proofreading exoribonuclease nsp14 and 2'-O-methyltransferase nsp16; these interactions enhance nsp14 and nsp16 enzymatic activities. Interacts with host DDX1 (via C-terminus). Interacts with non-structural protein 10. As to quaternary structure, homohexamer. In terms of assembly, interacts with non-structural protein 10. Requires Mn(2+) as cofactor. Zn(2+) is required as a cofactor. In terms of processing, specific enzymatic cleavages in vivo by its own proteases yield mature proteins. 3C-like proteinase nsp5 liberates nsps 6-16 from the polyprotein. Papain-like and 3C-like proteinases are autocatalytically processed. N-glycosylated.

It localises to the host endoplasmic reticulum membrane. Its subcellular location is the host cytoplasm. The protein resides in the host perinuclear region. The protein localises to the host endoplasmic reticulum. It is found in the host endoplasmic reticulum-Golgi intermediate compartment. The catalysed reaction is Thiol-dependent hydrolysis of ester, thioester, amide, peptide and isopeptide bonds formed by the C-terminal Gly of ubiquitin (a 76-residue protein attached to proteins as an intracellular targeting signal).. The enzyme catalyses RNA(n) + a ribonucleoside 5'-triphosphate = RNA(n+1) + diphosphate. It catalyses the reaction ATP + H2O = ADP + phosphate + H(+). It carries out the reaction uridylyl-uridylyl-ribonucleotide-RNA = a 3'-end uridylyl-2',3'-cyclophospho-uridine-RNA + a 5'-end dephospho-ribonucleoside-RNA. The catalysed reaction is a 5'-end diphospho-ribonucleoside in mRNA + GTP + H(+) = a 5'-end (5'-triphosphoguanosine)-ribonucleoside in mRNA + diphosphate. The enzyme catalyses a 5'-end (N(7)-methyl 5'-triphosphoguanosine)-ribonucleoside in mRNA + S-adenosyl-L-methionine = a 5'-end (N(7)-methyl 5'-triphosphoguanosine)-(2'-O-methyl-ribonucleoside) in mRNA + S-adenosyl-L-homocysteine + H(+). Functionally, multifunctional protein involved in the transcription and replication of viral RNAs. Contains the proteinases responsible for the cleavages of the polyprotein. May play a role in the modulation of host cell survival signaling pathway by interacting with host PHB and PHB2. Indeed, these two proteins play a role in maintaining the functional integrity of the mitochondria and protecting cells from various stresses. In terms of biological role, responsible for the cleavages located at the N-terminus of the replicase polyprotein. In addition, PL-PRO possesses a deubiquitinating/deISGylating activity and processes both 'Lys-48'- and 'Lys-63'-linked polyubiquitin chains from cellular substrates. Its function is as follows. Plays a role in host membrane rearrangement that leads to creation of cytoplasmic double-membrane vesicles (DMV) necessary for viral replication. Alone is able to induce paired membranes. Coexpression of nsp3 and nsp4 does not result in the formation of DMVs. Functionally, responsible for the majority of cleavages as it cleaves the C-terminus of replicase polyprotein at 11 sites. Recognizes substrates containing the core sequence [ILMVF]-Q-|-[SGACN]. Inhibited by the substrate-analog Cbz-Val-Asn-Ser-Thr-Leu-Gln-CMK. Forms a hexadecamer with nsp8 (8 subunits of each) that may participate in viral replication by acting as a primase. Alternatively, may synthesize substantially longer products than oligonucleotide primers. In terms of biological role, forms a hexadecamer with nsp7 (8 subunits of each) that may participate in viral replication by acting as a primase. Alternatively, may synthesize substantially longer products than oligonucleotide primers. Its function is as follows. Forms a primer, NSP9-pU, which is utilized by the polymerase for the initiation of RNA chains. Interacts with ribosome signal recognition particle RNA (SRP). Together with NSP8, suppress protein integration into the cell membrane, thereby disrupting host immune defenses. Functionally, plays a pivotal role in viral transcription by stimulating both nsp14 3'-5' exoribonuclease and nsp16 2'-O-methyltransferase activities. Therefore plays an essential role in viral mRNAs cap methylation. RNA-directed RNA polymerase that catalyzes the transcription of viral genomic and subgenomic RNAs. Acts in complex with nsp7 and nsp8 to transcribe both the minus and positive strands of genomic RNA. The kinase-like NiRAN domain of NSP12 attaches one or more nucleotides to the amino terminus of NSP9, forming a covalent RNA-protein intermediate that serves as transcription/replication primer. Subgenomic RNAs (sgRNAs) are formed by discontinuous transcription: The polymerase has the ability to pause at transcription-regulating sequences (TRS) and jump to the leader TRS, resulting in a major deletion. This creates a series of subgenomic RNAs that are replicated, transcribed and translated. In addition, Nsp12 is a subunit of the viral RNA capping enzyme that catalyzes the RNA guanylyltransferase reaction for genomic and sub-genomic RNAs. Subsequently, the NiRAN domain transfers RNA to GDP, and forms the core cap structure GpppA-RNA. In terms of biological role, multi-functional protein with a zinc-binding domain in N-terminus displaying RNA and DNA duplex-unwinding activities with 5' to 3' polarity. Activity of helicase is dependent on magnesium. Its function is as follows. Enzyme possessing two different activities: an exoribonuclease activity acting on both ssRNA and dsRNA in a 3' to 5' direction and a N7-guanine methyltransferase activity. Acts as a proofreading exoribonuclease for RNA replication, thereby lowering The sensitivity of the virus to RNA mutagens. Functionally, plays a role in viral transcription/replication and prevents the simultaneous activation of host cell dsRNA sensors, such as MDA5/IFIH1, OAS, and PKR. Acts by degrading the 5'-polyuridines generated during replication of the poly(A) region of viral genomic and subgenomic RNAs. Catalyzes a two-step reaction in which a 2'3'-cyclic phosphate (2'3'-cP) is first generated by 2'-O transesterification, which is then hydrolyzed to a 3'-phosphate (3'-P). If not degraded, poly(U) RNA would hybridize with poly(A) RNA tails and activate host dsRNA sensors. Methyltransferase that mediates mRNA cap 2'-O-ribose methylation to the 5'-cap structure of viral mRNAs. N7-methyl guanosine cap is a prerequisite for binding of nsp16. Therefore plays an essential role in viral mRNAs cap methylation which is essential to evade immune system. The protein is Replicase polyprotein 1ab (rep) of Gallus gallus (Chicken).